A 67-amino-acid chain; its full sequence is uncharacterized protein (67 aa).

This is an uncharacterized protein from Caenorhabditis elegans.